The chain runs to 415 residues: Tyrosine--tRNA ligase (415 aa).

Position 33 (Tyr33) interacts with L-tyrosine. A 'HIGH' region motif is present at residues 38–47 (PSGESLHLGN). Tyr161 and Gln165 together coordinate L-tyrosine. The 'KMSKS' region signature appears at 225–229 (KFGKS). Lys228 is a binding site for ATP. The region spanning 350–414 (MVIDFLLQAK…KKNYFIVVWK (65 aa)) is the S4 RNA-binding domain.

It belongs to the class-I aminoacyl-tRNA synthetase family. TyrS type 1 subfamily. As to quaternary structure, homodimer.

It localises to the cytoplasm. It catalyses the reaction tRNA(Tyr) + L-tyrosine + ATP = L-tyrosyl-tRNA(Tyr) + AMP + diphosphate + H(+). Functionally, catalyzes the attachment of tyrosine to tRNA(Tyr) in a two-step reaction: tyrosine is first activated by ATP to form Tyr-AMP and then transferred to the acceptor end of tRNA(Tyr). This Mycoplasmoides gallisepticum (strain R(low / passage 15 / clone 2)) (Mycoplasma gallisepticum) protein is Tyrosine--tRNA ligase.